Here is a 227-residue protein sequence, read N- to C-terminus: Cytidylate kinase (227 aa).

ATP is bound at residue 7 to 15 (GPAGSGKST).

Belongs to the cytidylate kinase family. Type 1 subfamily.

It localises to the cytoplasm. The catalysed reaction is CMP + ATP = CDP + ADP. It carries out the reaction dCMP + ATP = dCDP + ADP. The polypeptide is Cytidylate kinase (Salinibacter ruber (strain DSM 13855 / M31)).